The following is a 61-amino-acid chain: Small ribosomal subunit protein uS14 (61 aa).

Residues cysteine 24, cysteine 27, cysteine 40, and cysteine 43 each coordinate Zn(2+).

It belongs to the universal ribosomal protein uS14 family. Zinc-binding uS14 subfamily. In terms of assembly, part of the 30S ribosomal subunit. Contacts proteins S3 and S10. Zn(2+) serves as cofactor.

Its function is as follows. Binds 16S rRNA, required for the assembly of 30S particles and may also be responsible for determining the conformation of the 16S rRNA at the A site. This is Small ribosomal subunit protein uS14 from Borreliella burgdorferi (strain ATCC 35210 / DSM 4680 / CIP 102532 / B31) (Borrelia burgdorferi).